We begin with the raw amino-acid sequence, 762 residues long: cGMP-dependent protein kinase 2 (762 aa).

The interval 1 to 26 (MGNGSVKPKHAKHPDGHSGNLSNEAL) is disordered. Gly2 is lipidated: N-myristoyl glycine. Residues Ser110 and Ser117 each carry the phosphoserine modification. The interval 118–138 (RRGAKAGVSAEPTTRTYDLNK) is disordered. The segment at 168-283 (FLKRLDPQQI…DEEYRNFLRS (116 aa)) is cGMP-binding, high affinity; cAMP-binding, moderate affinity. 3',5'-cyclic GMP-binding positions include 232–235 (GELA), 242–243 (RT), Lys347, 356–359 (GEKA), 366–367 (RS), Asp412, and Arg415. The cGMP-binding, high affinity; cAMP-binding, low affinity stretch occupies residues 286–416 (LLKNLPEDKL…TLNRDDEKRH (131 aa)). Position 431 is a phosphoserine (Ser431). One can recognise a Protein kinase domain in the interval 453–711 (LEIIATLGVG…INDIKKHRWL (259 aa)). Residues 459-467 (LGVGGFGRV) and Lys482 each bind ATP. The Proton acceptor role is filled by Asp576. A Phosphothreonine modification is found at Thr609. In terms of domain architecture, AGC-kinase C-terminal spans 712 to 762 (NGFNWEGLKARSLPSPLRRELSGPIDHSYFDKYPPEKGVPPDEMSGWDKDF). A disordered region spans residues 740–762 (YFDKYPPEKGVPPDEMSGWDKDF).

It belongs to the protein kinase superfamily. AGC Ser/Thr protein kinase family. cGMP subfamily. In terms of assembly, interacts with GRIA1/GLUR1. In terms of processing, myristoylation mediates membrane localization.

The protein resides in the apical cell membrane. It localises to the cell membrane. The catalysed reaction is L-seryl-[protein] + ATP = O-phospho-L-seryl-[protein] + ADP + H(+). It catalyses the reaction L-threonyl-[protein] + ATP = O-phospho-L-threonyl-[protein] + ADP + H(+). Its activity is regulated as follows. Binding of cGMP results in enzyme activation. Crucial regulator of intestinal secretion and bone growth. Phosphorylates and activates CFTR on the plasma membrane. Plays a key role in intestinal secretion by regulating cGMP-dependent translocation of CFTR in jejunum. Acts downstream of NMDAR to activate the plasma membrane accumulation of GRIA1/GLUR1 in synapse and increase synaptic plasticity. Phosphorylates GRIA1/GLUR1 at Ser-863. Acts as a regulator of gene expression and activator of the extracellular signal-regulated kinases MAPK3/ERK1 and MAPK1/ERK2 in mechanically stimulated osteoblasts. Under fluid shear stress, mediates ERK activation and subsequent induction of FOS, FOSL1/FRA1, FOSL2/FRA2 and FOSB that play a key role in the osteoblast anabolic response to mechanical stimulation. The chain is cGMP-dependent protein kinase 2 (Prkg2) from Mus musculus (Mouse).